The sequence spans 307 residues: uncharacterized protein (307 aa).

This is an uncharacterized protein from Bacillus subtilis (strain 168).